The chain runs to 274 residues: Leucine-rich repeat-containing protein 10 (274 aa).

LRR repeat units follow at residues leucine 30–phenylalanine 51, threonine 52–leucine 74, asparagine 76–leucine 97, lysine 98–leucine 120, glutamine 121–leucine 143, leucine 145–leucine 166, arginine 167–methionine 189, and phenylalanine 191–asparagine 213. A disordered region spans residues arginine 236–serine 274. Residues arginine 239–arginine 250 show a composition bias toward basic and acidic residues. Residues glutamate 264–serine 274 are compositionally biased toward pro residues.

As to expression, detected specifically in the heart.

It localises to the nucleus. Functionally, may play important roles in cardiac development and/or cardiac function. The sequence is that of Leucine-rich repeat-containing protein 10 (Lrrc10) from Mus musculus (Mouse).